Here is a 177-residue protein sequence, read N- to C-terminus: Inorganic pyrophosphatase (177 aa).

Substrate-binding residues include Lys30, Arg44, and Tyr56. Mg(2+) is bound by residues Asp66, Asp71, and Asp103. Tyr142 serves as a coordination point for substrate.

It belongs to the PPase family. Homohexamer. Mg(2+) serves as cofactor.

The protein localises to the cytoplasm. The catalysed reaction is diphosphate + H2O = 2 phosphate + H(+). Catalyzes the hydrolysis of inorganic pyrophosphate (PPi) forming two phosphate ions. This chain is Inorganic pyrophosphatase, found in Mesorhizobium japonicum (strain LMG 29417 / CECT 9101 / MAFF 303099) (Mesorhizobium loti (strain MAFF 303099)).